The chain runs to 598 residues: Elongation factor 4 (598 aa).

In terms of domain architecture, tr-type G spans Ala5–Thr187. Residues Asp17–Thr22 and Asn134–Asp137 each bind GTP.

The protein belongs to the TRAFAC class translation factor GTPase superfamily. Classic translation factor GTPase family. LepA subfamily.

It localises to the cell inner membrane. The enzyme catalyses GTP + H2O = GDP + phosphate + H(+). In terms of biological role, required for accurate and efficient protein synthesis under certain stress conditions. May act as a fidelity factor of the translation reaction, by catalyzing a one-codon backward translocation of tRNAs on improperly translocated ribosomes. Back-translocation proceeds from a post-translocation (POST) complex to a pre-translocation (PRE) complex, thus giving elongation factor G a second chance to translocate the tRNAs correctly. Binds to ribosomes in a GTP-dependent manner. This is Elongation factor 4 from Psychrobacter arcticus (strain DSM 17307 / VKM B-2377 / 273-4).